We begin with the raw amino-acid sequence, 373 residues long: 3-isopropylmalate dehydrogenase (373 aa).

82–93 (GPKWGTGTVRPE) provides a ligand contact to NAD(+). The substrate site is built by Arg100, Arg110, Arg139, and Asp231. The Mg(2+) site is built by Asp231, Asp256, and Asp260. 295-306 (GSAPDLPANKVN) is a binding site for NAD(+).

It belongs to the isocitrate and isopropylmalate dehydrogenases family. In terms of assembly, homodimer. The cofactor is Mg(2+). Requires Mn(2+) as cofactor.

Its subcellular location is the cytoplasm. The catalysed reaction is (2R,3S)-3-isopropylmalate + NAD(+) = 4-methyl-2-oxopentanoate + CO2 + NADH. Its pathway is amino-acid biosynthesis; L-leucine biosynthesis; L-leucine from 3-methyl-2-oxobutanoate: step 3/4. In terms of biological role, catalyzes the oxidation of 3-carboxy-2-hydroxy-4-methylpentanoate (3-isopropylmalate) to 3-carboxy-4-methyl-2-oxopentanoate. The product decarboxylates to 4-methyl-2 oxopentanoate. The chain is 3-isopropylmalate dehydrogenase (LEU2) from Candida albicans (Yeast).